The sequence spans 160 residues: UPF0758 protein YfjY (160 aa).

The region spanning 38–160 (AFTSTQAARD…IYSFAEHGLL (123 aa)) is the MPN domain. Residues His109, His111, and Asp122 each coordinate Zn(2+). The short motif at 109–122 (HNHPSGDTTPSQAD) is the JAMM motif element.

This sequence belongs to the UPF0758 family.

This is UPF0758 protein YfjY (yfjY) from Escherichia coli (strain K12).